Here is a 380-residue protein sequence, read N- to C-terminus: Chaperone protein DnaJ 2 (380 aa).

The 66-residue stretch at 10–75 folds into the J domain; it reads DYYKILGVSK…KKRKEYDQAR (66 aa). The segment covering 32–56 has biased composition (basic and acidic residues); sequence KIARDNHPDSHPGDKAAEARFKEAS. The disordered stretch occupies residues 32-63; it reads KIARDNHPDSHPGDKAAEARFKEASEANDVLS. The CR-type zinc finger occupies 151 to 230; it reads GTTVTMDMVS…CHGSGRAKST (80 aa). The Zn(2+) site is built by cysteine 164, cysteine 167, cysteine 181, cysteine 184, cysteine 204, cysteine 207, cysteine 218, and cysteine 221. 4 CXXCXGXG motif repeats span residues 164–171, 181–188, 204–211, and 218–225; these read CQACRGTG, CSTCQGSG, CPDCHGRG, and CQVCHGSG.

The protein belongs to the DnaJ family. As to quaternary structure, homodimer. Zn(2+) serves as cofactor.

It localises to the cytoplasm. In terms of biological role, participates actively in the response to hyperosmotic and heat shock by preventing the aggregation of stress-denatured proteins and by disaggregating proteins, also in an autonomous, DnaK-independent fashion. Unfolded proteins bind initially to DnaJ; upon interaction with the DnaJ-bound protein, DnaK hydrolyzes its bound ATP, resulting in the formation of a stable complex. GrpE releases ADP from DnaK; ATP binding to DnaK triggers the release of the substrate protein, thus completing the reaction cycle. Several rounds of ATP-dependent interactions between DnaJ, DnaK and GrpE are required for fully efficient folding. Also involved, together with DnaK and GrpE, in the DNA replication of plasmids through activation of initiation proteins. This Cutibacterium acnes (strain DSM 16379 / KPA171202) (Propionibacterium acnes) protein is Chaperone protein DnaJ 2.